Consider the following 352-residue polypeptide: MAIISSSLDESNIPRSRKELRLVDSKIIADEKINKNLNIVRPTSFKEFIGQEQIKSSLKIAIDASKYRKEALEHTLLYGQPGLGKTTLALLISYEMNSKCRVASAPSIERPRDIVGLLLGLKEGEILFIDEIHRLNKLTEELLYSAMEDFRLDLTMGANRGARCRTINLPKFTLIGATTKLASISAPLRDRFGLCHKIEFYSNDELKQIIFNFSNLINLQLDSDACCSLAKISRGTPRIALRLLKRVRDYAQVMKKTNKISIEIIEKALDSQKIDNRGLDNVDRKFLSFLKLNNNNPIGLDSIAAGMGEESSMLEFVVEPYLIQIGFIMRTPRGRKLTSLGKKYISSNNEKY.

The interval 13–201 is large ATPase domain (RuvB-L); sequence IPRSRKELRL…FGLCHKIEFY (189 aa). Residues leucine 37, arginine 41, glycine 82, lysine 85, threonine 86, threonine 87, 148–150, arginine 191, tyrosine 201, and arginine 238 each bind ATP; that span reads EDF. Threonine 86 provides a ligand contact to Mg(2+). A small ATPAse domain (RuvB-S) region spans residues 202–273; that stretch reads SNDELKQIIF…IIEKALDSQK (72 aa). A head domain (RuvB-H) region spans residues 276–352; that stretch reads NRGLDNVDRK…KYISSNNEKY (77 aa). Positions 330 and 335 each coordinate DNA.

This sequence belongs to the RuvB family. Homohexamer. Forms an RuvA(8)-RuvB(12)-Holliday junction (HJ) complex. HJ DNA is sandwiched between 2 RuvA tetramers; dsDNA enters through RuvA and exits via RuvB. An RuvB hexamer assembles on each DNA strand where it exits the tetramer. Each RuvB hexamer is contacted by two RuvA subunits (via domain III) on 2 adjacent RuvB subunits; this complex drives branch migration. In the full resolvosome a probable DNA-RuvA(4)-RuvB(12)-RuvC(2) complex forms which resolves the HJ.

The protein resides in the cytoplasm. It carries out the reaction ATP + H2O = ADP + phosphate + H(+). Its function is as follows. The RuvA-RuvB-RuvC complex processes Holliday junction (HJ) DNA during genetic recombination and DNA repair, while the RuvA-RuvB complex plays an important role in the rescue of blocked DNA replication forks via replication fork reversal (RFR). RuvA specifically binds to HJ cruciform DNA, conferring on it an open structure. The RuvB hexamer acts as an ATP-dependent pump, pulling dsDNA into and through the RuvAB complex. RuvB forms 2 homohexamers on either side of HJ DNA bound by 1 or 2 RuvA tetramers; 4 subunits per hexamer contact DNA at a time. Coordinated motions by a converter formed by DNA-disengaged RuvB subunits stimulates ATP hydrolysis and nucleotide exchange. Immobilization of the converter enables RuvB to convert the ATP-contained energy into a lever motion, pulling 2 nucleotides of DNA out of the RuvA tetramer per ATP hydrolyzed, thus driving DNA branch migration. The RuvB motors rotate together with the DNA substrate, which together with the progressing nucleotide cycle form the mechanistic basis for DNA recombination by continuous HJ branch migration. Branch migration allows RuvC to scan DNA until it finds its consensus sequence, where it cleaves and resolves cruciform DNA. This is Holliday junction branch migration complex subunit RuvB from Prochlorococcus marinus (strain MIT 9515).